Here is a 333-residue protein sequence, read N- to C-terminus: Glycerol-3-phosphate dehydrogenase [NAD(P)+] (333 aa).

Serine 10, phenylalanine 11, arginine 31, and lysine 105 together coordinate NADPH. Positions 105, 136, and 138 each coordinate sn-glycerol 3-phosphate. Alanine 140 is a binding site for NADPH. Residues lysine 191, aspartate 244, serine 254, arginine 255, and asparagine 256 each contribute to the sn-glycerol 3-phosphate site. The active-site Proton acceptor is the lysine 191. An NADPH-binding site is contributed by arginine 255. NADPH-binding residues include valine 279 and glutamate 281.

Belongs to the NAD-dependent glycerol-3-phosphate dehydrogenase family.

Its subcellular location is the cytoplasm. It carries out the reaction sn-glycerol 3-phosphate + NAD(+) = dihydroxyacetone phosphate + NADH + H(+). The enzyme catalyses sn-glycerol 3-phosphate + NADP(+) = dihydroxyacetone phosphate + NADPH + H(+). The protein operates within membrane lipid metabolism; glycerophospholipid metabolism. Functionally, catalyzes the reduction of the glycolytic intermediate dihydroxyacetone phosphate (DHAP) to sn-glycerol 3-phosphate (G3P), the key precursor for phospholipid synthesis. The polypeptide is Glycerol-3-phosphate dehydrogenase [NAD(P)+] (Leptospira biflexa serovar Patoc (strain Patoc 1 / Ames)).